Consider the following 430-residue polypeptide: CinA-like protein (430 aa).

This sequence belongs to the CinA family.

In Prochlorococcus marinus (strain NATL1A), this protein is CinA-like protein.